We begin with the raw amino-acid sequence, 342 residues long: Dihydroorotase (342 aa).

Zn(2+)-binding residues include His13 and His15. Substrate-binding positions include 15–17 (HLR) and Asn41. Residues Lys98, His135, and His173 each contribute to the Zn(2+) site. At Lys98 the chain carries N6-carboxylysine. Position 135 (His135) interacts with substrate. Leu218 provides a ligand contact to substrate. Asp246 is a Zn(2+) binding site. The active site involves Asp246. The substrate site is built by His250 and Ala262.

It belongs to the metallo-dependent hydrolases superfamily. DHOase family. Class II DHOase subfamily. Homodimer. It depends on Zn(2+) as a cofactor.

The enzyme catalyses (S)-dihydroorotate + H2O = N-carbamoyl-L-aspartate + H(+). It functions in the pathway pyrimidine metabolism; UMP biosynthesis via de novo pathway; (S)-dihydroorotate from bicarbonate: step 3/3. Functionally, catalyzes the reversible cyclization of carbamoyl aspartate to dihydroorotate. In Vibrio parahaemolyticus serotype O3:K6 (strain RIMD 2210633), this protein is Dihydroorotase.